The sequence spans 335 residues: 2-acylglycerol O-acyltransferase 2-A (335 aa).

Transmembrane regions (helical) follow at residues 24 to 44 (WVFSFLALAQTCILLFFVLLF) and 47 to 67 (FWIISVVYGVWWFLDWDTPSK).

The protein belongs to the diacylglycerol acyltransferase family.

It is found in the endoplasmic reticulum membrane. It localises to the cytoplasm. The protein resides in the perinuclear region. It carries out the reaction a 2-acylglycerol + an acyl-CoA = a 1,2-diacylglycerol + CoA. The catalysed reaction is a 2-acylglycerol + an acyl-CoA = a 1,2-diacyl-sn-glycerol + CoA. It catalyses the reaction a 2-acylglycerol + an acyl-CoA = a 2,3-diacyl-sn-glycerol + CoA. The enzyme catalyses a 1-acylglycerol + an acyl-CoA = a 1,2-diacylglycerol + CoA. It carries out the reaction a 1-acylglycerol + an acyl-CoA = a 1,3-diacylglycerol + CoA. The catalysed reaction is 1-O-alkylglycerol + an acyl-CoA = 1-O-alkyl-3-acylglycerol + CoA. It catalyses the reaction an acyl-CoA + a 1,2-diacyl-sn-glycerol = a triacyl-sn-glycerol + CoA. It participates in glycerolipid metabolism; triacylglycerol biosynthesis. Functionally, catalyzes the formation of diacylglycerol from 2-monoacylglycerol and fatty acyl-CoA. Its function is as follows. Involved in glycerolipid synthesis and lipid metabolism. Catalyzes the formation of diacylglycerol, the precursor of triacylglycerol, by transferring the acyl chain of a fatty acyl-CoA to a monoacylglycerol. Plays a central role in absorption of dietary fat in the small intestine by catalyzing the resynthesis of triacylglycerol in enterocytes. Has a preference toward monoacylglycerols containing unsaturated fatty acids in an order of C18:3 &gt; C18:2 &gt; C18:1 &gt; C18:0 at sn-2. Able to use 1-monoalkylglycerol (1-MAkG, 1-O-alkylglycerol) as an acyl acceptor for the synthesis of monoalkyl-monoacylglycerol (MAMAG, 1-O-alkyl-3-acylglycerol or 1-O-alkyl-2-acylglycerol) and subsequently, with lower efficiency, may add another acyl chain producing monoalkyl-diacylglycerol (MADAG, 1-O-alkyl-2,3-diacylglycerol). Possesses weak but significant activity with diacylglycerol as substrate, producing triacylglycerol (triacyl-sn-glycerol). This Xenopus laevis (African clawed frog) protein is 2-acylglycerol O-acyltransferase 2-A (mogat2-a).